Here is a 188-residue protein sequence, read N- to C-terminus: mRNA transport factor GFD1 (188 aa).

Positions 1-128 (MPLESIWADA…KTQSKQDTAS (128 aa)) are disordered. Basic residues predominate over residues 18–28 (KQKPSHKRSNN). Over residues 29–44 (NKKNNNSRWSNESSSN) the composition is skewed to low complexity. The segment covering 59–79 (GNHESKTKNKIKETLPREKKP) has biased composition (basic and acidic residues). Residues Ser-87, Ser-106, and Ser-111 each carry the phosphoserine modification. The span at 112-128 (PSKMKTTKTQSKQDTAS) shows a compositional bias: low complexity. Residues 119–164 (KTQSKQDTASKMKLLKKKIEEQREILQKTHHKNQQQQVLMDFLNDE) are a coiled coil.

In terms of assembly, interacts with GLE1, NUP42, NAB2, ZDS1 and probably DBP5. Forms a complex with GLE1 and NAB2.

Its subcellular location is the cytoplasm. It localises to the nucleus. The protein localises to the nuclear pore complex. It is found in the nucleus membrane. Functionally, high-copy suppressor of mutant alleles of ATP-dependent RNA helicase DBP5, which is involved in mRNA export from the nucleus. It may also play an important role in a late stage of NAB2-mRNA export. This Saccharomyces cerevisiae (strain ATCC 204508 / S288c) (Baker's yeast) protein is mRNA transport factor GFD1 (GFD1).